A 214-amino-acid polypeptide reads, in one-letter code: Small ribosomal subunit protein eS1 (214 aa).

This sequence belongs to the eukaryotic ribosomal protein eS1 family.

This is Small ribosomal subunit protein eS1 from Aeropyrum pernix (strain ATCC 700893 / DSM 11879 / JCM 9820 / NBRC 100138 / K1).